Here is a 1186-residue protein sequence, read N- to C-terminus: Chromosome partition protein Smc (1186 aa).

Position 32-39 (32-39) interacts with ATP; it reads PNGSGKSN. 2 coiled-coil regions span residues 167-206 and 259-481; these read VLKY…EPLK and SSAI…QAYQ. In terms of domain architecture, SMC hinge spans 519–637; it reads GIRGAVLELI…EDLKGANELA (119 aa). 3 coiled-coil regions span residues 672–864, 893–943, and 990–1029; these read LLGR…MSSS, RDQR…NLLQ, and SIDE…DEEM.

This sequence belongs to the SMC family. As to quaternary structure, homodimer.

The protein localises to the cytoplasm. In terms of biological role, required for chromosome condensation and partitioning. The protein is Chromosome partition protein Smc of Bacillus subtilis (strain 168).